The following is a 64-amino-acid chain: Conotoxin Ts-011 (64 aa).

An N-terminal signal peptide occupies residues 1-22 (MHCLPVLVILLLLIASTPSVDA). Residues 23–52 (RPKTKDDVPPASFHGADDANRILQTLWNLR) constitute a propeptide that is removed on maturation. I63 carries the post-translational modification Isoleucine amide.

This sequence belongs to the conotoxin T superfamily. Post-translationally, contains 2 disulfide bonds that can be either 'C1-C3, C2-C4' or 'C1-C4, C2-C3', since these disulfide connectivities have been observed for conotoxins with cysteine framework V (for examples, see AC P0DQQ7 and AC P81755). As to expression, expressed by the venom duct.

The protein resides in the secreted. The protein is Conotoxin Ts-011 of Conus tessulatus (Tessellate cone).